We begin with the raw amino-acid sequence, 177 residues long: Crossover junction endodeoxyribonuclease RuvC (177 aa).

Catalysis depends on residues Asp7, Glu68, and Asp141. The Mg(2+) site is built by Asp7, Glu68, and Asp141.

It belongs to the RuvC family. As to quaternary structure, homodimer which binds Holliday junction (HJ) DNA. The HJ becomes 2-fold symmetrical on binding to RuvC with unstacked arms; it has a different conformation from HJ DNA in complex with RuvA. In the full resolvosome a probable DNA-RuvA(4)-RuvB(12)-RuvC(2) complex forms which resolves the HJ. The cofactor is Mg(2+).

It localises to the cytoplasm. It carries out the reaction Endonucleolytic cleavage at a junction such as a reciprocal single-stranded crossover between two homologous DNA duplexes (Holliday junction).. Its function is as follows. The RuvA-RuvB-RuvC complex processes Holliday junction (HJ) DNA during genetic recombination and DNA repair. Endonuclease that resolves HJ intermediates. Cleaves cruciform DNA by making single-stranded nicks across the HJ at symmetrical positions within the homologous arms, yielding a 5'-phosphate and a 3'-hydroxyl group; requires a central core of homology in the junction. The consensus cleavage sequence is 5'-(A/T)TT(C/G)-3'. Cleavage occurs on the 3'-side of the TT dinucleotide at the point of strand exchange. HJ branch migration catalyzed by RuvA-RuvB allows RuvC to scan DNA until it finds its consensus sequence, where it cleaves and resolves the cruciform DNA. The polypeptide is Crossover junction endodeoxyribonuclease RuvC (Nocardioides sp. (strain ATCC BAA-499 / JS614)).